Here is a 285-residue protein sequence, read N- to C-terminus: Aspartate/glutamate leucyltransferase (285 aa).

It belongs to the R-transferase family. Bpt subfamily.

It localises to the cytoplasm. It catalyses the reaction N-terminal L-glutamyl-[protein] + L-leucyl-tRNA(Leu) = N-terminal L-leucyl-L-glutamyl-[protein] + tRNA(Leu) + H(+). The catalysed reaction is N-terminal L-aspartyl-[protein] + L-leucyl-tRNA(Leu) = N-terminal L-leucyl-L-aspartyl-[protein] + tRNA(Leu) + H(+). Functionally, functions in the N-end rule pathway of protein degradation where it conjugates Leu from its aminoacyl-tRNA to the N-termini of proteins containing an N-terminal aspartate or glutamate. The chain is Aspartate/glutamate leucyltransferase from Dinoroseobacter shibae (strain DSM 16493 / NCIMB 14021 / DFL 12).